Reading from the N-terminus, the 216-residue chain is 2',3'-cyclic-nucleotide 3'-phosphodiesterase (216 aa).

The Proton donor/acceptor role is filled by His39. Residue Thr41 participates in substrate binding. His153 serves as the catalytic Proton donor/acceptor. Ser155 and Tyr158 together coordinate substrate.

It belongs to the 2H phosphoesterase superfamily. CPD1 family.

It is found in the golgi apparatus. It catalyses the reaction a nucleoside 2',3'-cyclic phosphate + H2O = a nucleoside 2'-phosphate + H(+). Involved in the metabolism of ADP-ribose 1',2'-cyclic phosphate which is produced as a consequence of tRNA splicing. The chain is 2',3'-cyclic-nucleotide 3'-phosphodiesterase (CPD1) from Yarrowia lipolytica (strain CLIB 122 / E 150) (Yeast).